Reading from the N-terminus, the 205-residue chain is Large ribosomal subunit protein uL4 (205 aa).

The disordered stretch occupies residues 48 to 79 (KAQKSRSDVSGGGKKPWKQKGSGHARAGTTRS).

Belongs to the universal ribosomal protein uL4 family. Part of the 50S ribosomal subunit.

In terms of biological role, one of the primary rRNA binding proteins, this protein initially binds near the 5'-end of the 23S rRNA. It is important during the early stages of 50S assembly. It makes multiple contacts with different domains of the 23S rRNA in the assembled 50S subunit and ribosome. Functionally, forms part of the polypeptide exit tunnel. The chain is Large ribosomal subunit protein uL4 from Methylococcus capsulatus (strain ATCC 33009 / NCIMB 11132 / Bath).